We begin with the raw amino-acid sequence, 222 residues long: Uridine diphosphate glucose pyrophosphatase NUDT14 (222 aa).

A Nudix hydrolase domain is found at 38-206 (KTHDSVTILM…DIPKTLGVIY (169 aa)). The Nudix box signature appears at 111 to 129 (PGLSLEEAACKEAWEECGY).

It belongs to the Nudix hydrolase family. Homodimer. Requires Mg(2+) as cofactor.

It is found in the cytoplasm. The catalysed reaction is UDP-sugar + H2O = UMP + alpha-D-aldose 1-phosphate.. In terms of biological role, hydrolyzes UDP-glucose to glucose 1-phosphate and UMP and ADP-ribose to ribose 5-phosphate and AMP. The physiological substrate is probably UDP-glucose. Poor activity on other substrates such as ADP-glucose, CDP-glucose, GDP-glucose and GDP-mannose. This Mus musculus (Mouse) protein is Uridine diphosphate glucose pyrophosphatase NUDT14 (Nudt14).